Here is a 670-residue protein sequence, read N- to C-terminus: PML-RARA-regulated adapter molecule 1 (670 aa).

A disordered region spans residues 1 to 561; sequence MAHHLPAAME…PQQLPPMDPK (561 aa). Residues 31–43 are compositionally biased toward basic and acidic residues; sequence DLPKKPPKPEFGK. A run of 4 repeats spans residues 70 to 81, 82 to 93, 94 to 105, and 106 to 117. The interval 70 to 165 is 4 X 12 AA repeats of K-P-P-[PQ]-P-[EQ]-[VAF]-T-D-L-P-K; it reads KPPPPEVTDL…SLPEPGAPAR (96 aa). Basic and acidic residues predominate over residues 114–129; it reads DLPKKPSKLELSDLSK. Ser-340 carries the phosphoserine modification. Positions 386-398 are enriched in low complexity; sequence SSASESSLPAAVA. Positions 454-463 are enriched in pro residues; sequence PAKPPLPPGP. The segment covering 504–514 has biased composition (acidic residues); it reads EIYELYDDVEP. A compositionally biased stretch (basic and acidic residues) spans 515–528; it reads RDDSSPSPKGRDEA. Positions 571 to 649 constitute an SH3 domain; sequence KAEREFRKKF…PRTALLPLET (79 aa).

As to quaternary structure, interacts with SKAP2, LCP2 and DBNL. May interact with LYN. Interacts with NEK6. May be phosphorylated on tyrosines. As to expression, expressed in peripheral blood leukocytes and bone marrow. Expressed in monocytes, and to a lesser extent in granulocytes and lymphocytes. Not expressed in non hematopoietic tissues except in lung.

Functionally, may be involved in myeloid differentiation. May be involved in integrin signaling in neutrophils. Binds to PtdIns(4)P. This is PML-RARA-regulated adapter molecule 1 (PRAM1) from Homo sapiens (Human).